The primary structure comprises 179 residues: Translation initiation factor IF-3 (179 aa).

The protein belongs to the IF-3 family. As to quaternary structure, monomer.

It is found in the cytoplasm. Its function is as follows. IF-3 binds to the 30S ribosomal subunit and shifts the equilibrium between 70S ribosomes and their 50S and 30S subunits in favor of the free subunits, thus enhancing the availability of 30S subunits on which protein synthesis initiation begins. This is Translation initiation factor IF-3 from Leptospira interrogans serogroup Icterohaemorrhagiae serovar copenhageni (strain Fiocruz L1-130).